A 167-amino-acid chain; its full sequence is Putative defense protein Hdd11-like (167 aa).

The first 18 residues, methionine 1–alanine 18, serve as a signal peptide directing secretion. The region spanning tyrosine 19–histidine 167 is the Reelin domain. An intrachain disulfide couples cysteine 28 to cysteine 105.

The protein belongs to the insect defense protein family. As to expression, in larvae, high expression in the fat body and low expression in midgut, hemocytes and malpighian tubules. No expression in silkgland.

Its subcellular location is the secreted. In terms of biological role, may have antimicrobial activity. This chain is Putative defense protein Hdd11-like, found in Samia ricini (Indian eri silkmoth).